We begin with the raw amino-acid sequence, 250 residues long: HTH-type transcriptional regulator KipR (250 aa).

The 61-residue stretch at 5–65 folds into the HTH iclR-type domain; it reads NKTVVKSMAL…DASGAYSLGL (61 aa). The segment at residues 26–45 is a DNA-binding region (H-T-H motif); sequence LSELVSLTGMPKTSVHRMVS. The 170-residue stretch at 80 to 249 folds into the IclR-ED domain; the sequence is IRKIAKPVME…ALQISRKIGY (170 aa).

In terms of biological role, transcriptional repressor of the kip gene-containing operon. In Bacillus subtilis (strain 168), this protein is HTH-type transcriptional regulator KipR (kipR).